The primary structure comprises 314 residues: Replication initiation protein (314 aa).

It belongs to the plasmid replication initiation factor family.

In terms of biological role, this protein is probably a specific topoisomerase involved in initiating replication. This protein is specifically required and may be rate-limiting for replication of the plasmid in vivo. This is Replication initiation protein (repC) from Staphylococcus aureus.